Consider the following 405-residue polypeptide: L-rhamnonate dehydratase (405 aa).

Residues His-33 and Arg-59 each coordinate substrate. Mg(2+) is bound by residues Asp-226, Glu-252, and Glu-280. The Proton acceptor role is filled by His-329. Glu-349 serves as a coordination point for substrate.

It belongs to the mandelate racemase/muconate lactonizing enzyme family. RhamD subfamily. As to quaternary structure, homooctamer; tetramer of dimers. Mg(2+) serves as cofactor.

The enzyme catalyses L-rhamnonate = 2-dehydro-3-deoxy-L-rhamnonate + H2O. In terms of biological role, catalyzes the dehydration of L-rhamnonate to 2-keto-3-deoxy-L-rhamnonate (KDR). The sequence is that of L-rhamnonate dehydratase from Escherichia coli O9:H4 (strain HS).